The following is a 249-amino-acid chain: Phosphate import ATP-binding protein PstB 1 (249 aa).

An ABC transporter domain is found at Phe-4–Val-244. Residue Gly-36–Ser-43 coordinates ATP.

It belongs to the ABC transporter superfamily. Phosphate importer (TC 3.A.1.7) family. In terms of assembly, the complex is composed of two ATP-binding proteins (PstB), two transmembrane proteins (PstC and PstA) and a solute-binding protein (PstS).

It is found in the cell inner membrane. It carries out the reaction phosphate(out) + ATP + H2O = ADP + 2 phosphate(in) + H(+). Its function is as follows. Part of the ABC transporter complex PstSACB involved in phosphate import. Responsible for energy coupling to the transport system. This chain is Phosphate import ATP-binding protein PstB 1, found in Aliivibrio fischeri (strain ATCC 700601 / ES114) (Vibrio fischeri).